A 555-amino-acid chain; its full sequence is Xylulose kinase (555 aa).

Substrate is bound by residues histidine 88, arginine 158, aspartate 274, and asparagine 275. ATP-binding positions include tryptophan 357, 455-456, and asparagine 459; that span reads GA.

This sequence belongs to the FGGY kinase family.

The protein resides in the cytoplasm. It catalyses the reaction D-xylulose + ATP = D-xylulose 5-phosphate + ADP + H(+). This chain is Xylulose kinase, found in Schizosaccharomyces pombe (strain 972 / ATCC 24843) (Fission yeast).